The chain runs to 309 residues: Probable ABC transporter permease protein y4oQ (309 aa).

A run of 7 helical transmembrane segments spans residues 25–45 (VVWFTMPAAAIMLLVLGVPLV), 89–109 (LIYAVVAVSLECALGILFAVL), 123–143 (LMLIPMVITPAVVGIFWKLLY), 174–194 (VIIVDVWQSTPFFTLIILAGL), 221–241 (LPHLVPYIMIAAAFRIIGVMA), 246–266 (IFLLTLGGPGNVTTTLSVYAY), and 278–298 (TTAISWIYVVFVLAISAPLIW). One can recognise an ABC transmembrane type-1 domain in the interval 85–296 (IRVTLIYAVV…VFVLAISAPL (212 aa)).

This sequence belongs to the binding-protein-dependent transport system permease family. MalFG subfamily.

The protein localises to the cell inner membrane. Its function is as follows. Probably part of the binding-protein-dependent transport system y4oPQRS. This system probably transports a sugar-like molecule. Probably responsible for the translocation of the substrate across the membrane. The chain is Probable ABC transporter permease protein y4oQ from Sinorhizobium fredii (strain NBRC 101917 / NGR234).